The primary structure comprises 115 residues: MKFVLLFGVLLVTLFSYSSAEMLDDFHQADEDELVSLIKKEEARAKECTPRFYDCSHDRHICCRSELFKDVCTCFYPEGGDNEVCTCQQPKHLKYMEKAAGKAKKFGGKIKKWFG.

The first 20 residues, 1-20, serve as a signal peptide directing secretion; the sequence is MKFVLLFGVLLVTLFSYSSA. Positions 21 to 44 are excised as a propeptide; the sequence is EMLDDFHQADEDELVSLIKKEEAR. Intrachain disulfides connect Cys-48-Cys-63, Cys-55-Cys-72, Cys-62-Cys-87, and Cys-74-Cys-85.

Belongs to the neurotoxin 19 (CSTX) family. 01 subfamily. In terms of tissue distribution, expressed by the venom gland.

The protein resides in the secreted. The polypeptide is U3-lycotoxin-Ls1r (Lycosa singoriensis (Wolf spider)).